Here is a 223-residue protein sequence, read N- to C-terminus: Deoxyribose-phosphate aldolase (223 aa).

D89 functions as the Proton donor/acceptor in the catalytic mechanism. The active-site Schiff-base intermediate with acetaldehyde is the K152. K181 acts as the Proton donor/acceptor in catalysis.

This sequence belongs to the DeoC/FbaB aldolase family. DeoC type 1 subfamily.

It is found in the cytoplasm. The enzyme catalyses 2-deoxy-D-ribose 5-phosphate = D-glyceraldehyde 3-phosphate + acetaldehyde. It functions in the pathway carbohydrate degradation; 2-deoxy-D-ribose 1-phosphate degradation; D-glyceraldehyde 3-phosphate and acetaldehyde from 2-deoxy-alpha-D-ribose 1-phosphate: step 2/2. In terms of biological role, catalyzes a reversible aldol reaction between acetaldehyde and D-glyceraldehyde 3-phosphate to generate 2-deoxy-D-ribose 5-phosphate. The chain is Deoxyribose-phosphate aldolase from Listeria monocytogenes serotype 4a (strain HCC23).